Reading from the N-terminus, the 669-residue chain is Myb-like protein M (669 aa).

The interval 27–69 (DPSLMDDEFSDNEYDLSPKDDVPSPSKRGRGQIQNGIRRSPNK) is disordered. The span at 30–40 (LMDDEFSDNEY) shows a compositional bias: acidic residues. HTH myb-type domains are found at residues 60-118 (QNGI…SPDI) and 119-170 (RKGP…SREV). 2 consecutive DNA-binding regions (H-T-H motif) follow at residues 90–114 (WKRI…KRVL) and 142–166 (WKKI…KSLQ). Positions 172–223 (WVPKEDEVLVKKVDEMGENLSWLEVSEYLAKLKHTNTLRTALECKTRYLQLT) constitute a Myb-like domain. Disordered stretches follow at residues 226 to 530 (GGSI…EDNG) and 550 to 636 (IKNK…PHQS). 3 stretches are compositionally biased toward low complexity: residues 234 to 382 (NQSN…SSPS), 389 to 415 (NNNN…NSNN), and 450 to 464 (PTSL…SSPS). Residues 465 to 482 (CNNSIRQPSPSPSIKTFK) show a composition bias toward polar residues. Low complexity-rich tracts occupy residues 483 to 521 (STIV…NNDN), 555 to 593 (NNNN…NSDN), and 611 to 636 (SNFK…PHQS).

It is found in the nucleus. The sequence is that of Myb-like protein M (mybM) from Dictyostelium discoideum (Social amoeba).